The primary structure comprises 228 residues: Cytochrome c oxidase subunit 2 (228 aa).

The Mitochondrial intermembrane segment spans residues 1 to 26 (MSTWANLGLQDSASPLMEQLIFFHDH). The chain crosses the membrane as a helical span at residues 27–48 (ALLILVMITVLVGYLMFMLFFN). Over 49 to 62 (NYVNRFLLHGQLIE) the chain is Mitochondrial matrix. Residues 63 to 82 (MIWTILPAIILLFIALPSLR) form a helical membrane-spanning segment. Over 83-228 (LLYLLDEINE…FIKWISSNNS (146 aa)) the chain is Mitochondrial intermembrane. H161, C196, E198, C200, H204, and M207 together coordinate Cu cation. Residue E198 coordinates Mg(2+).

The protein belongs to the cytochrome c oxidase subunit 2 family. Component of the cytochrome c oxidase (complex IV, CIV), a multisubunit enzyme composed of a catalytic core of 3 subunits and several supernumerary subunits. The complex exists as a monomer or a dimer and forms supercomplexes (SCs) in the inner mitochondrial membrane with ubiquinol-cytochrome c oxidoreductase (cytochrome b-c1 complex, complex III, CIII). It depends on Cu cation as a cofactor.

It is found in the mitochondrion inner membrane. It carries out the reaction 4 Fe(II)-[cytochrome c] + O2 + 8 H(+)(in) = 4 Fe(III)-[cytochrome c] + 2 H2O + 4 H(+)(out). In terms of biological role, component of the cytochrome c oxidase, the last enzyme in the mitochondrial electron transport chain which drives oxidative phosphorylation. The respiratory chain contains 3 multisubunit complexes succinate dehydrogenase (complex II, CII), ubiquinol-cytochrome c oxidoreductase (cytochrome b-c1 complex, complex III, CIII) and cytochrome c oxidase (complex IV, CIV), that cooperate to transfer electrons derived from NADH and succinate to molecular oxygen, creating an electrochemical gradient over the inner membrane that drives transmembrane transport and the ATP synthase. Cytochrome c oxidase is the component of the respiratory chain that catalyzes the reduction of oxygen to water. Electrons originating from reduced cytochrome c in the intermembrane space (IMS) are transferred via the dinuclear copper A center (CU(A)) of subunit 2 and heme A of subunit 1 to the active site in subunit 1, a binuclear center (BNC) formed by heme A3 and copper B (CU(B)). The BNC reduces molecular oxygen to 2 water molecules using 4 electrons from cytochrome c in the IMS and 4 protons from the mitochondrial matrix. The chain is Cytochrome c oxidase subunit 2 (mt:CoII) from Drosophila melanogaster (Fruit fly).